The following is a 479-amino-acid chain: tRNA-2-methylthio-N(6)-dimethylallyladenosine synthase (479 aa).

One can recognise an MTTase N-terminal domain in the interval 6–122 (KTVYIKTVGC…IPDMLTKVTS (117 aa)). Residues C15, C51, C85, C172, C176, and C179 each contribute to the [4Fe-4S] cluster site. The Radical SAM core domain occupies 158 to 390 (RPTPFQAYLR…LAVQDRISKE (233 aa)). The TRAM domain occupies 393-464 (QKLIGDTVEV…SHTLIGRVKT (72 aa)).

This sequence belongs to the methylthiotransferase family. MiaB subfamily. As to quaternary structure, monomer. [4Fe-4S] cluster serves as cofactor.

Its subcellular location is the cytoplasm. It catalyses the reaction N(6)-dimethylallyladenosine(37) in tRNA + (sulfur carrier)-SH + AH2 + 2 S-adenosyl-L-methionine = 2-methylsulfanyl-N(6)-dimethylallyladenosine(37) in tRNA + (sulfur carrier)-H + 5'-deoxyadenosine + L-methionine + A + S-adenosyl-L-homocysteine + 2 H(+). In terms of biological role, catalyzes the methylthiolation of N6-(dimethylallyl)adenosine (i(6)A), leading to the formation of 2-methylthio-N6-(dimethylallyl)adenosine (ms(2)i(6)A) at position 37 in tRNAs that read codons beginning with uridine. In Rhodopirellula baltica (strain DSM 10527 / NCIMB 13988 / SH1), this protein is tRNA-2-methylthio-N(6)-dimethylallyladenosine synthase.